We begin with the raw amino-acid sequence, 110 residues long: Large ribosomal subunit protein uL22 (110 aa).

The protein belongs to the universal ribosomal protein uL22 family. In terms of assembly, part of the 50S ribosomal subunit.

Functionally, this protein binds specifically to 23S rRNA; its binding is stimulated by other ribosomal proteins, e.g. L4, L17, and L20. It is important during the early stages of 50S assembly. It makes multiple contacts with different domains of the 23S rRNA in the assembled 50S subunit and ribosome. In terms of biological role, the globular domain of the protein is located near the polypeptide exit tunnel on the outside of the subunit, while an extended beta-hairpin is found that lines the wall of the exit tunnel in the center of the 70S ribosome. The sequence is that of Large ribosomal subunit protein uL22 from Bdellovibrio bacteriovorus (strain ATCC 15356 / DSM 50701 / NCIMB 9529 / HD100).